Consider the following 491-residue polypeptide: Glutamyl-tRNA(Gln) amidotransferase subunit A (491 aa).

S158 serves as the catalytic Charge relay system. The active-site Acyl-ester intermediate is S182.

This sequence belongs to the amidase family. GatA subfamily. Heterotrimer of A, B and C subunits.

It catalyses the reaction L-glutamyl-tRNA(Gln) + L-glutamine + ATP + H2O = L-glutaminyl-tRNA(Gln) + L-glutamate + ADP + phosphate + H(+). Functionally, allows the formation of correctly charged Gln-tRNA(Gln) through the transamidation of misacylated Glu-tRNA(Gln) in organisms which lack glutaminyl-tRNA synthetase. The reaction takes place in the presence of glutamine and ATP through an activated gamma-phospho-Glu-tRNA(Gln). In Bradyrhizobium diazoefficiens (strain JCM 10833 / BCRC 13528 / IAM 13628 / NBRC 14792 / USDA 110), this protein is Glutamyl-tRNA(Gln) amidotransferase subunit A.